The following is a 541-amino-acid chain: Propionyl-CoA carboxylase beta chain, mitochondrial (541 aa).

The transit peptide at 1-28 (MAAAIRIRAVAAGARLSVLNCGLGITTR) directs the protein to the mitochondrion. The 259-residue stretch at 34-292 (PVSVKERIDN…SSQDPAPIRE (259 aa)) folds into the CoA carboxyltransferase N-terminal domain. The carboxyltransferase stretch occupies residues 34 to 535 (PVSVKERIDN…SKKVHRPWRK (502 aa)). Ser-73 is subject to Phosphoserine. N6-acetyllysine; alternate is present on Lys-101. Lys-101 carries the post-translational modification N6-succinyllysine; alternate. At Lys-250 the chain carries N6-succinyllysine. In terms of domain architecture, CoA carboxyltransferase C-terminal spans 296–535 (PSDRLVPELD…SKKVHRPWRK (240 aa)). Residues 327 to 360 (DEREFFEIMPSYAKNIVVGFARMNGRTVGIVGNQ) are acyl-CoA binding. An N6-acetyllysine; alternate mark is found at Lys-476 and Lys-491. Lys-476 and Lys-491 each carry N6-succinyllysine; alternate.

It belongs to the AccD/PCCB family. In terms of assembly, the holoenzyme is a dodecamer composed of 6 PCCA/alpha subunits and 6 PCCB/beta subunits. In terms of tissue distribution, broadly expressed. Most abundantly expressed in the kidney, liver, small intestine and stomach.

It localises to the mitochondrion matrix. The catalysed reaction is propanoyl-CoA + hydrogencarbonate + ATP = (S)-methylmalonyl-CoA + ADP + phosphate + H(+). The enzyme catalyses butanoyl-CoA + hydrogencarbonate + ATP = (2S)-ethylmalonyl-CoA + ADP + phosphate + H(+). Its pathway is metabolic intermediate metabolism; propanoyl-CoA degradation; succinyl-CoA from propanoyl-CoA: step 1/3. Its function is as follows. This is one of the 2 subunits of the biotin-dependent propionyl-CoA carboxylase (PCC), a mitochondrial enzyme involved in the catabolism of odd chain fatty acids, branched-chain amino acids isoleucine, threonine, methionine, and valine and other metabolites. Propionyl-CoA carboxylase catalyzes the carboxylation of propionyl-CoA/propanoyl-CoA to D-methylmalonyl-CoA/(S)-methylmalonyl-CoA. Within the holoenzyme, the alpha subunit catalyzes the ATP-dependent carboxylation of the biotin carried by the biotin carboxyl carrier (BCC) domain, while the beta subunit then transfers the carboxyl group from carboxylated biotin to propionyl-CoA. Propionyl-CoA carboxylase also significantly acts on butyryl-CoA/butanoyl-CoA, which is converted to ethylmalonyl-CoA/(2S)-ethylmalonyl-CoA. Other alternative minor substrates include (2E)-butenoyl-CoA/crotonoyl-CoA. This Mus musculus (Mouse) protein is Propionyl-CoA carboxylase beta chain, mitochondrial.